A 461-amino-acid polypeptide reads, in one-letter code: Glycolipid 2-alpha-mannosyltransferase 2 (461 aa).

Residues 1-12 are Cytoplasmic-facing; it reads MKPSIFYSSRQP. Residues 13 to 35 form a helical; Signal-anchor for type II membrane protein membrane-spanning segment; sequence YLKYLAIILTTITIYVLTHSSYS. Over residues 35–52 the composition is skewed to polar residues; it reads SADPNINDVTTKPISETV. The segment at 35–138 is disordered; the sequence is SADPNINDVT…SSSKDPVKPE (104 aa). The Lumenal portion of the chain corresponds to 36-461; sequence ADPNINDVTT…QKPKEWEKYQ (426 aa). 2 stretches are compositionally biased toward low complexity: residues 61-70 and 106-116; these read SSPEQQQQQP and PKSSSSSPQQQ. The segment covering 117 to 126 has biased composition (basic and acidic residues); the sequence is EKQDTKKESE. Glu-349 functions as the Nucleophile in the catalytic mechanism.

It belongs to the glycosyltransferase 15 family.

The protein localises to the golgi apparatus membrane. Functionally, involved in O-glycosylation of cell wall and secreted proteins. Transfers an alpha-D-mannosyl residue from GDP-mannose into lipid-linked oligosaccharide, forming an alpha-(1-&gt;2)-D-mannosyl-D-mannose linkage. Mainly responsible for the addition of the third mannose residue in an O-linked mannose pentamer. Can also substitute for MNT1 by adding the second mannose residue. Important for adherence to host surfaces and for virulence. In Candida albicans (strain SC5314 / ATCC MYA-2876) (Yeast), this protein is Glycolipid 2-alpha-mannosyltransferase 2 (MNT2).